The primary structure comprises 1226 residues: Methionine synthase (1226 aa).

The 321-residue stretch at 6 to 326 (RQQIEAQLKQ…EHIRQMAQAV (321 aa)) folds into the Hcy-binding domain. The Zn(2+) site is built by Cys248, Cys311, and Cys312. One can recognise a Pterin-binding domain in the interval 357 to 618 (FINVGERTNV…VPEKLREAVE (262 aa)). The B12-binding N-terminal domain occupies 651–745 (SALEWRTWPV…FINAEKQSGS (95 aa)). Methylcob(III)alamin is bound by residues Glu695, 757 to 761 (GDVHD), His760, Ser805, Thr809, and Ala861. A B12-binding domain is found at 747-882 (NGKILLATVK…SDERRPAFIE (136 aa)). Residues 898-1226 (KKPRTKPVTL…EKWLGPNING (329 aa)) form the AdoMet activation domain. S-adenosyl-L-methionine is bound by residues Asp948, Arg1136, and 1191–1192 (YF).

Belongs to the vitamin-B12 dependent methionine synthase family. Methylcob(III)alamin serves as cofactor. It depends on Zn(2+) as a cofactor.

It catalyses the reaction (6S)-5-methyl-5,6,7,8-tetrahydrofolate + L-homocysteine = (6S)-5,6,7,8-tetrahydrofolate + L-methionine. The protein operates within amino-acid biosynthesis; L-methionine biosynthesis via de novo pathway; L-methionine from L-homocysteine (MetH route): step 1/1. Catalyzes the transfer of a methyl group from methyl-cobalamin to homocysteine, yielding enzyme-bound cob(I)alamin and methionine. Subsequently, remethylates the cofactor using methyltetrahydrofolate. This Vibrio parahaemolyticus serotype O3:K6 (strain RIMD 2210633) protein is Methionine synthase (metH).